Reading from the N-terminus, the 233-residue chain is Sugar fermentation stimulation protein homolog (233 aa).

The protein belongs to the SfsA family.

This Rhodospirillum centenum (strain ATCC 51521 / SW) protein is Sugar fermentation stimulation protein homolog.